The primary structure comprises 157 residues: Ribosome maturation factor RimP (157 aa).

Belongs to the RimP family.

Its subcellular location is the cytoplasm. In terms of biological role, required for maturation of 30S ribosomal subunits. The chain is Ribosome maturation factor RimP from Lactococcus lactis subsp. cremoris (strain MG1363).